A 203-amino-acid polypeptide reads, in one-letter code: Large ribosomal subunit protein bL25 (203 aa).

Belongs to the bacterial ribosomal protein bL25 family. CTC subfamily. Part of the 50S ribosomal subunit; part of the 5S rRNA/L5/L18/L25 subcomplex. Contacts the 5S rRNA. Binds to the 5S rRNA independently of L5 and L18.

Functionally, this is one of the proteins that binds to the 5S RNA in the ribosome where it forms part of the central protuberance. The protein is Large ribosomal subunit protein bL25 of Rickettsia peacockii (strain Rustic).